The following is a 354-amino-acid chain: S-adenosylmethionine:tRNA ribosyltransferase-isomerase (354 aa).

Belongs to the QueA family. Monomer.

It localises to the cytoplasm. It catalyses the reaction 7-aminomethyl-7-carbaguanosine(34) in tRNA + S-adenosyl-L-methionine = epoxyqueuosine(34) in tRNA + adenine + L-methionine + 2 H(+). The protein operates within tRNA modification; tRNA-queuosine biosynthesis. Functionally, transfers and isomerizes the ribose moiety from AdoMet to the 7-aminomethyl group of 7-deazaguanine (preQ1-tRNA) to give epoxyqueuosine (oQ-tRNA). The protein is S-adenosylmethionine:tRNA ribosyltransferase-isomerase of Pseudomonas fluorescens (strain ATCC BAA-477 / NRRL B-23932 / Pf-5).